A 433-amino-acid chain; its full sequence is Peptidoglycan DD-endopeptidase ShyC (433 aa).

Residues 10-30 form a helical membrane-spanning segment; the sequence is WLHRVLITAFSAIIVFAIFFL. Positions 299, 303, and 380 each coordinate Zn(2+).

It belongs to the peptidase M23B family. Zn(2+) serves as cofactor.

The protein resides in the cell inner membrane. It functions in the pathway cell wall degradation; peptidoglycan degradation. Reduced activity in 0.5 mM EDTA and a complete loss of activity at higher EDTA concentrations. Its function is as follows. Cell wall peptidoglycan (PG) DD-endopeptidase. Hydrolyzes peptide cross-links which covalently connect adjacent PG strands probably to allow insertion of new glycans and thus cell wall expansion. Degrades purified whole PG sacculi in vitro. This chain is Peptidoglycan DD-endopeptidase ShyC, found in Vibrio cholerae serotype O1 (strain ATCC 39315 / El Tor Inaba N16961).